Reading from the N-terminus, the 272-residue chain is D-aminoacyl-tRNA deacylase (272 aa).

This sequence belongs to the DtdA deacylase family. Monomer. Zn(2+) serves as cofactor.

It catalyses the reaction a D-aminoacyl-tRNA + H2O = a tRNA + a D-alpha-amino acid + H(+). The enzyme catalyses glycyl-tRNA(Ala) + H2O = tRNA(Ala) + glycine + H(+). Its function is as follows. D-aminoacyl-tRNA deacylase with broad substrate specificity. By recycling D-aminoacyl-tRNA to D-amino acids and free tRNA molecules, this enzyme counteracts the toxicity associated with the formation of D-aminoacyl-tRNA entities in vivo. This Thermococcus kodakarensis (strain ATCC BAA-918 / JCM 12380 / KOD1) (Pyrococcus kodakaraensis (strain KOD1)) protein is D-aminoacyl-tRNA deacylase.